An 86-amino-acid chain; its full sequence is Small ribosomal subunit protein bS20 (86 aa).

The segment at 1–25 (MTNIKSQQKRNRTNERARLRNKSVK) is disordered.

It belongs to the bacterial ribosomal protein bS20 family.

Functionally, binds directly to 16S ribosomal RNA. The chain is Small ribosomal subunit protein bS20 from Mycobacterium leprae (strain Br4923).